Consider the following 438-residue polypeptide: Xylose isomerase (438 aa).

Residues Asp-306 and Asp-308 each contribute to the Mg(2+) site.

This sequence belongs to the xylose isomerase family. As to quaternary structure, homotetramer. Requires Mg(2+) as cofactor.

It localises to the cytoplasm. It carries out the reaction alpha-D-xylose = alpha-D-xylulofuranose. The protein is Xylose isomerase of Pseudomonas fluorescens (strain SBW25).